Reading from the N-terminus, the 67-residue chain is Peptide Hp1036 (67 aa).

Positions 1 to 23 (MKTQFAILLITLVLFQMFSQSDA) are cleaved as a signal peptide. At Phe-36 the chain carries Phenylalanine amide. A propeptide spanning residues 40 to 67 (GLNDLSDLDELFDGEISEADVDFLREIM) is cleaved from the precursor.

The protein belongs to the non-disulfide-bridged peptide (NDBP) superfamily. Short antimicrobial peptide (group 4) family. Expressed by the venom gland.

The protein resides in the secreted. The protein localises to the target cell membrane. Amphipathic peptide with antibacterial activities. Shows antiviral activities against the herpes simplex virus type-1. It potently inhibits the initial infection by provoking the rupture of viral envelop and the dissociation of proteins from the virions (EC(50) is 0.43 uM). It also effectively inhibits viral attachment (EC(50) is 2.87 uM), viral entry (EC(50) is 4.29 uM) and viral proliferation after infection (EC(50) is 7.86). Morever, it enters mammalian tested cells (Vero) and reduces the intracellular infectivity. This Heterometrus petersii (Asian forest scorpion) protein is Peptide Hp1036.